A 310-amino-acid chain; its full sequence is UPF0324 membrane protein VP0936 (310 aa).

10 consecutive transmembrane segments (helical) span residues 7–29 (PFGL…LVIG), 44–63 (IASF…GFGI), 75–94 (GIGL…SLIA), 104–126 (AYLI…APAI), 133–155 (IGLA…PVIG), 165–187 (FGTW…SAYG), 199–218 (LARA…IFSR), 228–250 (LVIP…FPQL), 257–279 (IFTI…ISIS), and 289–308 (LLFG…SWLV).

Belongs to the UPF0324 family.

The protein localises to the cell membrane. This chain is UPF0324 membrane protein VP0936, found in Vibrio parahaemolyticus serotype O3:K6 (strain RIMD 2210633).